The chain runs to 245 residues: uncharacterized protein (245 aa).

A signal peptide spans 1–27; it reads MKLKKRVSMFLVALTMCGGLFVTPAKA.

This is an uncharacterized protein from Bacillus subtilis (strain 168).